The following is a 235-amino-acid chain: Homeobox protein Nkx-2.8 (235 aa).

The segment covering 51–67 has biased composition (polar residues); the sequence is SDESGLETSPADSSQLA. A disordered region spans residues 51-86; it reads SDESGLETSPADSSQLASLRRESPGSDPEKRRKRRV. Basic and acidic residues predominate over residues 69–80; sequence LRRESPGSDPEK. The homeobox DNA-binding region spans 81 to 140; it reads RRKRRVLFSKAQTLELERRFRQQRYLSAPEREQLARLLRLTPTQVKIWFQNHRYKLKRGR.

It belongs to the NK-2 homeobox family. As to expression, prominent expression in ventral brain and neural tube structures.

It is found in the nucleus. Possible role in the specification of a distinct subset of neurons. The chain is Homeobox protein Nkx-2.8 (Nkx2-8) from Mus musculus (Mouse).